An 873-amino-acid polypeptide reads, in one-letter code: Leucine--tRNA ligase (873 aa).

The 'HIGH' region motif lies at 48 to 58; sequence PYPSGKLHMGH. A 'KMSKS' region motif is present at residues 636-640; the sequence is KMSKS. Position 639 (lysine 639) interacts with ATP.

Belongs to the class-I aminoacyl-tRNA synthetase family.

The protein resides in the cytoplasm. It catalyses the reaction tRNA(Leu) + L-leucine + ATP = L-leucyl-tRNA(Leu) + AMP + diphosphate. The chain is Leucine--tRNA ligase from Cupriavidus pinatubonensis (strain JMP 134 / LMG 1197) (Cupriavidus necator (strain JMP 134)).